Here is a 101-residue protein sequence, read N- to C-terminus: Small ribosomal subunit protein uS14 (101 aa).

The interval Met-1–Lys-23 is disordered.

This sequence belongs to the universal ribosomal protein uS14 family. In terms of assembly, part of the 30S ribosomal subunit. Contacts proteins S3 and S10.

In terms of biological role, binds 16S rRNA, required for the assembly of 30S particles and may also be responsible for determining the conformation of the 16S rRNA at the A site. The protein is Small ribosomal subunit protein uS14 of Rhodospirillum centenum (strain ATCC 51521 / SW).